The primary structure comprises 295 residues: HTH-type transcriptional regulator ShiR (295 aa).

Residues M1–T58 form the HTH lysR-type domain. A DNA-binding region (H-T-H motif) is located at residues F18–R37.

This sequence belongs to the LysR transcriptional regulatory family.

Its function is as follows. Activates expression of the shikimate transporter ShiA in the presence of shikimate. Binds to the shiA promoter region. The polypeptide is HTH-type transcriptional regulator ShiR (Corynebacterium glutamicum (strain R)).